We begin with the raw amino-acid sequence, 316 residues long: Methionyl-tRNA formyltransferase (316 aa).

A (6S)-5,6,7,8-tetrahydrofolate-binding site is contributed by 112–115; sequence SLLP.

Belongs to the Fmt family.

The enzyme catalyses L-methionyl-tRNA(fMet) + (6R)-10-formyltetrahydrofolate = N-formyl-L-methionyl-tRNA(fMet) + (6S)-5,6,7,8-tetrahydrofolate + H(+). Attaches a formyl group to the free amino group of methionyl-tRNA(fMet). The formyl group appears to play a dual role in the initiator identity of N-formylmethionyl-tRNA by promoting its recognition by IF2 and preventing the misappropriation of this tRNA by the elongation apparatus. This chain is Methionyl-tRNA formyltransferase, found in Glaesserella parasuis serovar 5 (strain SH0165) (Haemophilus parasuis).